A 376-amino-acid polypeptide reads, in one-letter code: Heme-dependent oxidative N-demethylase gamma subunit (376 aa).

In terms of assembly, the heme-dependent oxidative N-demethylase (HODM) is a heterotetramer composed of a catalytic alpha subunit, a FMN/2Fe-2S-dependent oxidoreductase beta subunit, a gamma subunit with putative aminotransferase activity, and a delta subunit of unknown function.

Component of the heme-dependent oxidative N-demethylase (HODM) enzyme, that catalyzes the NADPH-dependent oxidation of dimethylamine (DMA) to methylamine (MA) and formaldehyde. Functions in bacterial methylated amine catabolism, linking alkylamine oxidation to the tetrahydrofolate C1 pool. The gamma subunit of HODM may act as an aminomethyltransferase involved in the detoxification of formaldehyde released by the alpha subunit; this process requires tetrahydrofolate (THF). The polypeptide is Heme-dependent oxidative N-demethylase gamma subunit (Ectopseudomonas mendocina (strain ymp) (Pseudomonas mendocina)).